The following is a 396-amino-acid chain: Tryptophan synthase beta chain (396 aa).

At lysine 86 the chain carries N6-(pyridoxal phosphate)lysine.

The protein belongs to the TrpB family. In terms of assembly, tetramer of two alpha and two beta chains. Pyridoxal 5'-phosphate serves as cofactor.

It catalyses the reaction (1S,2R)-1-C-(indol-3-yl)glycerol 3-phosphate + L-serine = D-glyceraldehyde 3-phosphate + L-tryptophan + H2O. The protein operates within amino-acid biosynthesis; L-tryptophan biosynthesis; L-tryptophan from chorismate: step 5/5. In terms of biological role, the beta subunit is responsible for the synthesis of L-tryptophan from indole and L-serine. In Blochmanniella pennsylvanica (strain BPEN), this protein is Tryptophan synthase beta chain.